We begin with the raw amino-acid sequence, 218 residues long: Small ribosomal subunit protein uS3c (218 aa).

The region spanning 47-118 (VQKNMRTSSG…KLNIAVTRIA (72 aa)) is the KH type-2 domain.

It belongs to the universal ribosomal protein uS3 family. In terms of assembly, part of the 30S ribosomal subunit.

It is found in the plastid. The protein localises to the chloroplast. The chain is Small ribosomal subunit protein uS3c (rps3) from Nicotiana sylvestris (Wood tobacco).